The primary structure comprises 230 residues: CRP-like protein Clp (230 aa).

An a nucleoside 3',5'-cyclic phosphate-binding site is contributed by 18–139 (PSLALDAGTI…APKILYAIGV (122 aa)). Residues 158-230 (LDVTDRIVRT…GKTVVLYGTR (73 aa)) form the HTH crp-type domain. The H-T-H motif DNA-binding region spans 190–209 (RQELARLVGCSREMAGRVLK).

In terms of assembly, homodimer.

The protein resides in the cytoplasm. Allosterically inhibited by cyclic di-GMP (c-di-GMP), which binds to Clp and abolishes its ability to bind its target gene promoter. Functionally, global transcriptional regulator that regulates virulence factors production by activating or repressing the expression of a large set of genes in diffusible signal factor (DSF) pathway. The polypeptide is CRP-like protein Clp (clp) (Xanthomonas axonopodis pv. citri (strain 306)).